Reading from the N-terminus, the 529-residue chain is uncharacterized protein (529 aa).

ATP contacts are provided by residues 178–186 (TSGTTGQPK), Asp401, Arg416, and Lys510.

This sequence belongs to the ATP-dependent AMP-binding enzyme family.

This is an uncharacterized protein from Bacillus subtilis (strain 168).